An 864-amino-acid polypeptide reads, in one-letter code: E3 ubiquitin-protein ligase Itchy (864 aa).

The region spanning 1–115 is the C2 domain; sequence MSDSGPQLDS…LKSNNMKLEE (115 aa). Ser-2 carries the post-translational modification N-acetylserine. Polar residues predominate over residues 151-164; sequence NGETSCSESTTQND. The interval 151–294 is disordered; sequence NGETSCSEST…SQAPLPPGWE (144 aa). The span at 165–174 shows a compositional bias: basic and acidic residues; it reads DGCRTRDDTR. Low complexity predominate over residues 195 to 206; that stretch reads NGNNSPSLSNGG. Ser-199 bears the Phosphoserine; by MAPK8 mark. The segment covering 210 to 224 has biased composition (pro residues); that stretch reads SRPPRPSRPPPPTPR. A Phosphothreonine; by MAPK8 modification is found at Thr-222. The segment covering 230–259 has biased composition (low complexity); the sequence is NGSPSTNSDSDGSSTGSLPPTNTNVNTSTS. Residue Ser-232 is modified to Phosphoserine; by MAPK8. WW domains are found at residues 287-320 and 319-352; these read APLP…RPEP and EPLP…RPTL. The residue at position 346 (Thr-346) is a Phosphothreonine; by SGK3. Positions 356-432 are required for interaction with FYN; it reads RNYEQWQLQR…RITQWEDPRS (77 aa). Tyr-381 carries the phosphotyrosine; by FYN modification. 2 consecutive WW domains span residues 399–432 and 439–472; these read GPLP…DPRS and KPLP…DPRT. At Ser-411 the chain carries Phosphoserine; by SGK3. Residues 530 to 864 enclose the HECT domain; it reads SPQDLRRRLW…IEETEGFGQE (335 aa). The tract at residues 535–544 is MAP kinase docking site; that stretch reads RRRLWVIFPG. The active-site Glycyl thioester intermediate is Cys-832.

Monomer. Part of a ternary complex composed of SMAD3, ITCH/AIP4 and NEDD9/HEF1; within the complex NEDD9/HEF1 interacts (via N-terminus) with ITCH/AIP4 (via WW domains); the complex mediates ubiquitination and proteasomal degradation of NEDD9/HEF1. Interacts (via WW domains) with OCNL. Interacts (via WW domains) with NOTCH1. Interacts (via WW domains) JUN. Interacts with JUNB; the interaction promotes ITCH-mediated ubiquitination and degradation of JUNB. Interacts with FYN; the interaction phosphorylates ITCH on Tyr-381 decreasing binding of JUNB. Interacts (via WW domain 2) with N4BP1; the interaction inhibits the E3 ubiquitin-protein ligase activity. Interacts with NDFIP1 and NDFIP2; the interaction with NDFIP proteins activates the E3 ubiquitin-protein ligase and may induce its recruitment to exosomes. Interacts with ARHGEF7. Interacts with RNF11. Interacts (via the WW 1 domain) with NFE2 (via the PXY motif 1); the interaction promotes 'Lys-63'-linked ubiquitination of NFE2, retains it in the cytoplasm and prevents its transactivation activity. Interacts (via WW domains) with CXCR4 (via C-terminus); the interaction depends on CXCR4 phosphorylation. Found in a complex with E3 ligase DTX3L and ESCRT-0 components HGS and STAM. Interacts with DTX3L (via C-terminus); the interaction is increased upon CXCL12 stimulation and inhibits ITCH catalytic activity (the interaction is direct). Interacts with HGS. Interacts (via WW domains) with PCBP2 within a complex containing ITCH, MAVS and PCBP2. Interacts (via WW domains) with TXNIP (via C-terminus). Interacts with p15 BID. Interacts with ERBB4. Interacts with DTX1. Interacts with SPART. Interacts with SNX9 and SNX18. Interacts (via its WW domains) with ATN1. Interacts (via WW domains) with SGK3. Interacts with CBLC. Interacts with OTUD7B. Interacts (via WW domain 1,2 and 3) with PI4K2A; the interaction inhibits PI4K2A catalytic activity and promotes ITCH catalytic activity. Interacts with ARRDC4. Part of a complex containing ITCH, NDFIP1 and MAP3K7. Interacts with UBE2L3; the interaction is mediated by NDFIP1. Interacts with MAPK8/JNK1. Interacts (via WW domains) with ARRDC1 (via PPxY motifs); the interaction is direct and participates in the recruitment of the ubiquitin-protein ligase ITCH to the NOTCH1 receptor. Interacts (via WW domains) with ARRDC2. Interacts (via WW domains) with ARRDC3. Interacts directly with LDLRAD3; this interaction promotes ITCH auto-ubiquitination leading to its degradation. Interacts with ENTREP1; enhances the ubiquitination of CXCR4 by ITCH and its subsequent endocytosis. Interacts with USP12 and WDR48/UAF1; the interaction is more efficient when both USP12 and WDR48/UAF1 are involved and may facilitate the recruitment of the USP12 deubiquitinase complex to Notch. In terms of assembly, (Microbial infection) Interacts with Epstein-Barr virus LMP2A. On T-cell activation, phosphorylation by the JNK cascade on serine and threonine residues surrounding the PRR domain accelerates the ubiquitination and degradation of JUN and JUNB. The increased ITCH catalytic activity due to phosphorylation by JNK1 may occur due to a conformational change disrupting the interaction between the PRR/WW motifs domain and the HECT domain and, thus exposing the HECT domain. Phosphorylation by FYN reduces interaction with JUNB and negatively controls JUN ubiquitination and degradation. Interacts directly with LDLRAD3; this interaction promotes ITCH auto-ubiquitination leading to its degradation. In terms of processing, monoubiquitinated. Autopolyubiquitinated with 'Lys-63' linkages which does not lead to protein degradation. In terms of tissue distribution, detected in uterus (at protein level). Widely expressed.

The protein localises to the cell membrane. The protein resides in the cytoplasm. It localises to the nucleus. It is found in the early endosome membrane. Its subcellular location is the endosome membrane. It catalyses the reaction S-ubiquitinyl-[E2 ubiquitin-conjugating enzyme]-L-cysteine + [acceptor protein]-L-lysine = [E2 ubiquitin-conjugating enzyme]-L-cysteine + N(6)-ubiquitinyl-[acceptor protein]-L-lysine.. Its pathway is protein modification; protein ubiquitination. Its activity is regulated as follows. Activated by NDFIP1- and NDFIP2-binding. Activated by PI4K2A-binding. Inhibited by DTX3L-binding. Inhibited by N4BP1 binding. Its function is as follows. Acts as an E3 ubiquitin-protein ligase which accepts ubiquitin from an E2 ubiquitin-conjugating enzyme in the form of a thioester and then directly transfers the ubiquitin to targeted substrates. It catalyzes 'Lys-29'-, 'Lys-48'- and 'Lys-63'-linked ubiquitin conjugation. Involved in the control of inflammatory signaling pathways. Is an essential component of a ubiquitin-editing protein complex, comprising also TNFAIP3, TAX1BP1 and RNF11, that ensures the transient nature of inflammatory signaling pathways. Promotes the association of the complex after TNF stimulation. Once the complex is formed, TNFAIP3 deubiquitinates 'Lys-63' polyubiquitin chains on RIPK1 and catalyzes the formation of 'Lys-48'-polyubiquitin chains. This leads to RIPK1 proteasomal degradation and consequently termination of the TNF- or LPS-mediated activation of NFKB1. Ubiquitinates RIPK2 by 'Lys-63'-linked conjugation and influences NOD2-dependent signal transduction pathways. Regulates the transcriptional activity of several transcription factors involved in immune response. Ubiquitinates NFE2 by 'Lys-63' linkages and is implicated in the control of the development of hematopoietic lineages. Mediates JUN ubiquitination and degradation. Mediates JUNB ubiquitination and degradation. Critical regulator of type 2 helper T (Th2) cell cytokine production by inducing JUNB ubiquitination and degradation. Involved in the negative regulation of MAVS-dependent cellular antiviral responses. Ubiquitinates MAVS through 'Lys-48'-linked conjugation resulting in MAVS proteasomal degradation. Following ligand stimulation, regulates sorting of Wnt receptor FZD4 to the degradative endocytic pathway probably by modulating PI42KA activity. Ubiquitinates PI4K2A and negatively regulates its catalytic activity. Ubiquitinates chemokine receptor CXCR4 and regulates sorting of CXCR4 to the degradative endocytic pathway following ligand stimulation by ubiquitinating endosomal sorting complex required for transport ESCRT-0 components HGS and STAM. Targets DTX1 for lysosomal degradation and controls NOTCH1 degradation, in the absence of ligand, through 'Lys-29'-linked polyubiquitination. Ubiquitinates SNX9. Ubiquitinates MAP3K7 through 'Lys-48'-linked conjugation. Together with UBR5, involved in the regulation of apoptosis and reactive oxygen species levels through the ubiquitination and proteasomal degradation of TXNIP: catalyzes 'Lys-48'-/'Lys-63'-branched ubiquitination of TXNIP. ITCH synthesizes 'Lys-63'-linked chains, while UBR5 is branching multiple 'Lys-48'-linked chains of substrate initially modified. Mediates the antiapoptotic activity of epidermal growth factor through the ubiquitination and proteasomal degradation of p15 BID. Ubiquitinates BRAT1 and this ubiquitination is enhanced in the presence of NDFIP1. Ubiquitinates NEDD9/HEF1, resulting in proteasomal degradation of NEDD9/HEF1. The protein is E3 ubiquitin-protein ligase Itchy (Itch) of Mus musculus (Mouse).